A 302-amino-acid chain; its full sequence is tRNA dimethylallyltransferase (302 aa).

9 to 16 serves as a coordination point for ATP; the sequence is GATATGKS. 11–16 is a binding site for substrate; it reads TATGKS. Residues 34–37 form an interaction with substrate tRNA region; it reads DSRQ.

It belongs to the IPP transferase family. As to quaternary structure, monomer. Mg(2+) serves as cofactor.

The catalysed reaction is adenosine(37) in tRNA + dimethylallyl diphosphate = N(6)-dimethylallyladenosine(37) in tRNA + diphosphate. Catalyzes the transfer of a dimethylallyl group onto the adenine at position 37 in tRNAs that read codons beginning with uridine, leading to the formation of N6-(dimethylallyl)adenosine (i(6)A). In Nostoc punctiforme (strain ATCC 29133 / PCC 73102), this protein is tRNA dimethylallyltransferase.